A 242-amino-acid chain; its full sequence is DnaJ homolog subfamily B member 3 (242 aa).

The J domain occupies 1 to 69 (MVDYYEVLGV…RKREVYDRCG (69 aa)).

Testis specific. Expression is confined to the germline without any contribution of the somatic components.

May operate as a co-chaperone of the male germ cell- and haploid stage-specific Hsp70 proteins. In Mus musculus (Mouse), this protein is DnaJ homolog subfamily B member 3 (Dnajb3).